A 284-amino-acid polypeptide reads, in one-letter code: RCS-specific HTH-type transcriptional activator RclR (284 aa).

Cysteines 21 and 89 form a disulfide. Positions 177 to 278 constitute an HTH araC/xylS-type domain; sequence PRLGAVIQQM…GCTPGEYRER (102 aa). 2 consecutive DNA-binding regions (H-T-H motif) follow at residues 197–218 and 245–268; these read ESLASIAHMSRASFAQLFRDVS and VVVIAESVGYASESSFHKAFVREF.

With respect to regulation, oxydation of Cys-21 leads to partial activation of RclR, followed by the formation of an intramolecular disulfide bond between Cys-21 and Cys-89, which stabilizes the active form of RclR. In terms of biological role, involved in reactive chlorine species (RCS) stress resistance. Up-regulates, in response to hypochlorous acid (HOCl), the expression of three genes essential for survival of RCS stress (rclA, rclB and rclC) and its own expression. This chain is RCS-specific HTH-type transcriptional activator RclR (rclR), found in Escherichia coli (strain K12).